An 81-amino-acid polypeptide reads, in one-letter code: ATP synthase subunit c (81 aa).

2 helical membrane passes run 6–26 (AAASVIAAALAVGLAAIGPGF) and 57–77 (LAFMESLTIYGLVIALVLLFA).

Belongs to the ATPase C chain family. F-type ATPases have 2 components, F(1) - the catalytic core - and F(0) - the membrane proton channel. F(1) has five subunits: alpha(3), beta(3), gamma(1), delta(1), epsilon(1). F(0) has four main subunits: a(1), b(1), b'(1) and c(10-14). The alpha and beta chains form an alternating ring which encloses part of the gamma chain. F(1) is attached to F(0) by a central stalk formed by the gamma and epsilon chains, while a peripheral stalk is formed by the delta, b and b' chains.

The protein resides in the cellular thylakoid membrane. Functionally, f(1)F(0) ATP synthase produces ATP from ADP in the presence of a proton or sodium gradient. F-type ATPases consist of two structural domains, F(1) containing the extramembraneous catalytic core and F(0) containing the membrane proton channel, linked together by a central stalk and a peripheral stalk. During catalysis, ATP synthesis in the catalytic domain of F(1) is coupled via a rotary mechanism of the central stalk subunits to proton translocation. Key component of the F(0) channel; it plays a direct role in translocation across the membrane. A homomeric c-ring of between 10-14 subunits forms the central stalk rotor element with the F(1) delta and epsilon subunits. This chain is ATP synthase subunit c, found in Rippkaea orientalis (strain PCC 8801 / RF-1) (Cyanothece sp. (strain PCC 8801)).